Here is a 159-residue protein sequence, read N- to C-terminus: Ribosomal RNA large subunit methyltransferase H (159 aa).

S-adenosyl-L-methionine contacts are provided by residues L76, G108, and 127–132; that span reads FSKMTL.

This sequence belongs to the RNA methyltransferase RlmH family. In terms of assembly, homodimer.

The protein resides in the cytoplasm. It catalyses the reaction pseudouridine(1915) in 23S rRNA + S-adenosyl-L-methionine = N(3)-methylpseudouridine(1915) in 23S rRNA + S-adenosyl-L-homocysteine + H(+). Specifically methylates the pseudouridine at position 1915 (m3Psi1915) in 23S rRNA. The chain is Ribosomal RNA large subunit methyltransferase H from Bacillus anthracis (strain CDC 684 / NRRL 3495).